The following is a 187-amino-acid chain: MNLQHHFLIAMPALQDPIFRRSVVYICEHNTNGAMGIIVNKPLENLKIEGILEKLKITPEPRDESIRLDKPVMLGGPLAEDRGFILHTPPSNFASSIRISDNTVMTTSRDVLETLGTDKQPSDVLVALGYASWEKGQLEQEILDNAWLTASADLNILFKTPIADRWREAAKLIGVDILTMPGVAGHA.

Belongs to the UPF0301 (AlgH) family.

In Shigella boydii serotype 4 (strain Sb227), this protein is UPF0301 protein YqgE.